Here is a 559-residue protein sequence, read N- to C-terminus: Cocaine esterase (559 aa).

A signal peptide spans 1–26; it reads MRLHRLRARLSAVACGLLLLLVRGQG. Residue Q27 is modified to Pyrrolidone carboxylic acid. C95 and C123 are disulfide-bonded. N111 carries an N-linked (GlcNAc...) asparagine glycan. The Acyl-ester intermediate role is filled by S228. N276 is a glycosylation site (N-linked (GlcNAc...) asparagine). An intrachain disulfide couples C280 to C291. Catalysis depends on charge relay system residues E345 and H457. A Prevents secretion from ER motif is present at residues 556 to 559; the sequence is HTEL.

This sequence belongs to the type-B carboxylesterase/lipase family. Monomer. In terms of processing, glycosylated. In terms of tissue distribution, preferentially expressed in intestine with moderate expression in liver. Within the intestine, highest expression is found in small intestine with lower expression in colon and rectum.

Its subcellular location is the endoplasmic reticulum lumen. The enzyme catalyses cocaine + H2O = ecgonine methyl ester + benzoate + H(+). It carries out the reaction a carboxylic ester + H2O = an alcohol + a carboxylate + H(+). It catalyses the reaction 4-methylumbelliferyl acetate + H2O = 4-methylumbelliferone + acetate + H(+). The catalysed reaction is 2-(5Z,8Z,11Z,14Z-eicosatetraenoyl)-glycerol + H2O = glycerol + (5Z,8Z,11Z,14Z)-eicosatetraenoate + H(+). The enzyme catalyses prostaglandin E2 1-glyceryl ester + H2O = prostaglandin E2 + glycerol + H(+). It carries out the reaction prostaglandin F2alpha 1-glyceryl ester + H2O = prostaglandin F2alpha + glycerol + H(+). Functionally, involved in the detoxification of xenobiotics and in the activation of ester and amide prodrugs. Shows high catalytic efficiency for hydrolysis of cocaine, 4-methylumbelliferyl acetate, heroin and 6-monoacetylmorphine. Hydrolyzes aspirin, substrates with large alcohol group and small acyl group and endogenous lipids such as triacylglycerol. Converts monoacylglycerides to free fatty acids and glycerol. Hydrolyzes of 2-arachidonoylglycerol and prostaglandins. The sequence is that of Cocaine esterase from Homo sapiens (Human).